The chain runs to 890 residues: Alanine--tRNA ligase (890 aa).

Zn(2+)-binding residues include histidine 568, histidine 572, cysteine 680, and histidine 684.

It belongs to the class-II aminoacyl-tRNA synthetase family. The cofactor is Zn(2+).

It localises to the cytoplasm. The catalysed reaction is tRNA(Ala) + L-alanine + ATP = L-alanyl-tRNA(Ala) + AMP + diphosphate. Functionally, catalyzes the attachment of alanine to tRNA(Ala) in a two-step reaction: alanine is first activated by ATP to form Ala-AMP and then transferred to the acceptor end of tRNA(Ala). Also edits incorrectly charged Ser-tRNA(Ala) and Gly-tRNA(Ala) via its editing domain. The protein is Alanine--tRNA ligase of Psychrobacter cryohalolentis (strain ATCC BAA-1226 / DSM 17306 / VKM B-2378 / K5).